The following is a 258-amino-acid chain: MLAKRIIPCLDVINNQVIKGIQFQNHQIIGDIVSLAQYYSQEGADELVFYDIMASPNNQTVSKKWVAKIAEVINIPFCVAGGISTLYQAKEILKFGADKISINSPALLNPSLIQKLADHLGTQCVVVGIDAWYNAQLGTYQIKCFSGNSSRMQSTTWELLDWVIQIQQYGAGEIVLNMMNQDGMQNGYDLKQLSKIRKHCTIPLIASGGAGTAQHFLDVFQYADVDGALAASVFHKKIIKINELKNFLIKQGVEIRLC.

Catalysis depends on residues aspartate 11 and aspartate 130.

It belongs to the HisA/HisF family. Heterodimer of HisH and HisF.

Its subcellular location is the cytoplasm. It carries out the reaction 5-[(5-phospho-1-deoxy-D-ribulos-1-ylimino)methylamino]-1-(5-phospho-beta-D-ribosyl)imidazole-4-carboxamide + L-glutamine = D-erythro-1-(imidazol-4-yl)glycerol 3-phosphate + 5-amino-1-(5-phospho-beta-D-ribosyl)imidazole-4-carboxamide + L-glutamate + H(+). It functions in the pathway amino-acid biosynthesis; L-histidine biosynthesis; L-histidine from 5-phospho-alpha-D-ribose 1-diphosphate: step 5/9. Functionally, IGPS catalyzes the conversion of PRFAR and glutamine to IGP, AICAR and glutamate. The HisF subunit catalyzes the cyclization activity that produces IGP and AICAR from PRFAR using the ammonia provided by the HisH subunit. The polypeptide is Imidazole glycerol phosphate synthase subunit HisF (Blochmanniella floridana).